Consider the following 874-residue polypeptide: Leucine--tRNA ligase (874 aa).

The 'HIGH' region signature appears at 47-57 (PYPSGKLHMGH). The 'KMSKS' region signature appears at 636–640 (KMSKS). Residue Lys-639 participates in ATP binding.

This sequence belongs to the class-I aminoacyl-tRNA synthetase family.

It localises to the cytoplasm. It carries out the reaction tRNA(Leu) + L-leucine + ATP = L-leucyl-tRNA(Leu) + AMP + diphosphate. The protein is Leucine--tRNA ligase of Acinetobacter baumannii (strain SDF).